The primary structure comprises 149 residues: DnaJ homolog subfamily C member 24 (149 aa).

A J domain is found at 11 to 82; the sequence is DWYSILGADP…ETKREYDLQR (72 aa). The region spanning 93 to 148 is the DPH-type MB domain; sequence VDAQVYLEEMSWNEGDHSFYLSCRCGGKYSVSKDEAEEVSLISCDTCSLIIELLHY. Positions 115, 117, 136, and 139 each coordinate Zn(2+).

It belongs to the DPH4 family. In terms of assembly, monomer and homooligomer. Iron binding promotes oligomerization.

It localises to the cytoplasm. Its subcellular location is the cytoskeleton. The protein operates within protein modification; peptidyl-diphthamide biosynthesis. Functionally, stimulates the ATPase activity of several Hsp70-type chaperones. This ability is enhanced by iron-binding. The iron-bound form is redox-active and can function as electron carrier. Plays a role in the diphthamide biosynthesis, a post-translational modification of histidine which occurs in translation elongation factor 2 (EEF2) which can be ADP-ribosylated by diphtheria toxin and by Pseudomonas exotoxin A (Eta). The protein is DnaJ homolog subfamily C member 24 of Homo sapiens (Human).